The primary structure comprises 221 residues: Eukaryotic translation initiation factor 3 subunit K (221 aa).

A PCI domain is found at 46–215; the sequence is YDLEANLACL…EKIEFDNLAP (170 aa).

This sequence belongs to the eIF-3 subunit K family. As to quaternary structure, component of the eukaryotic translation initiation factor 3 (eIF-3) complex.

It localises to the cytoplasm. Functionally, component of the eukaryotic translation initiation factor 3 (eIF-3) complex, which is involved in protein synthesis of a specialized repertoire of mRNAs and, together with other initiation factors, stimulates binding of mRNA and methionyl-tRNAi to the 40S ribosome. The eIF-3 complex specifically targets and initiates translation of a subset of mRNAs involved in cell proliferation. The chain is Eukaryotic translation initiation factor 3 subunit K from Anopheles gambiae (African malaria mosquito).